Consider the following 564-residue polypeptide: Nucleoprotein (564 aa).

The tract at residues 54-236 (LRKTKRGEED…VTKDESSINI (183 aa)) is binding site for the cap structure m7GTP. Mn(2+)-binding residues include aspartate 380 and glutamate 382. Zn(2+)-binding residues include glutamate 390, cysteine 497, histidine 500, and cysteine 525. Residue aspartate 529 coordinates Mn(2+).

The protein belongs to the arenaviridae nucleocapsid protein family. Homomultimerizes to form the nucleocapsid. Binds to viral genomic RNA. Interacts with glycoprotein G2. Interacts with protein Z; this interaction probably directs the encapsidated genome to budding sites. Interacts with protein L; this interaction does not interfere with Z-L interaction. Interacts with host IKBKE (via Protein kinase domain); the interaction inhibits IKBKE kinase activity.

The protein localises to the virion. The protein resides in the host cytoplasm. Encapsidates the genome, protecting it from nucleases. The encapsidated genomic RNA is termed the nucleocapsid (NC). Serves as template for viral transcription and replication. The increased presence of protein N in host cell does not seem to trigger the switch from transcription to replication as observed in other negative strain RNA viruses. Through the interaction with host IKBKE, strongly inhibits the phosphorylation and nuclear translocation of host IRF3, a protein involved in interferon activation pathway, leading to the inhibition of interferon-beta and IRF3-dependent promoters activation. Also encodes a functional 3'-5' exoribonuclease that degrades preferentially dsRNA substrates and thereby participates in the suppression of interferon induction. The chain is Nucleoprotein from Akodon azarae (Azara's grass mouse).